We begin with the raw amino-acid sequence, 228 residues long: Tungstate uptake system permease protein TupB (228 aa).

5 helical membrane passes run Ile-25 to Ile-45, Val-65 to Leu-85, Ala-102 to Leu-122, Val-144 to Phe-164, and Met-203 to Tyr-223. The 197-residue stretch at Ile-26 to Ile-222 folds into the ABC transmembrane type-1 domain.

This sequence belongs to the binding-protein-dependent transport system permease family. As to quaternary structure, the complex is composed of two ATP-binding proteins (TupC), two transmembrane proteins (TupB) and a solute-binding protein (TupA).

The protein localises to the cell membrane. In terms of biological role, part of an ABC transporter complex involved in tungstate uptake. Probably responsible for the translocation of the substrate across the membrane. This is Tungstate uptake system permease protein TupB from Peptoclostridium acidaminophilum (Eubacterium acidaminophilum).